Reading from the N-terminus, the 549-residue chain is Arginine--tRNA ligase (549 aa).

Residues 122 to 132 (ANPTGFLHLGH) carry the 'HIGH' region motif.

It belongs to the class-I aminoacyl-tRNA synthetase family. Monomer.

It localises to the cytoplasm. The enzyme catalyses tRNA(Arg) + L-arginine + ATP = L-arginyl-tRNA(Arg) + AMP + diphosphate. The protein is Arginine--tRNA ligase of Mycoplasmoides gallisepticum (strain R(low / passage 15 / clone 2)) (Mycoplasma gallisepticum).